The primary structure comprises 194 residues: Imidazoleglycerol-phosphate dehydratase (194 aa).

This sequence belongs to the imidazoleglycerol-phosphate dehydratase family.

The protein localises to the cytoplasm. The enzyme catalyses D-erythro-1-(imidazol-4-yl)glycerol 3-phosphate = 3-(imidazol-4-yl)-2-oxopropyl phosphate + H2O. The protein operates within amino-acid biosynthesis; L-histidine biosynthesis; L-histidine from 5-phospho-alpha-D-ribose 1-diphosphate: step 6/9. This is Imidazoleglycerol-phosphate dehydratase from Lacticaseibacillus casei (strain BL23) (Lactobacillus casei).